Reading from the N-terminus, the 313-residue chain is UbiA prenyltransferase claS (313 aa).

A run of 2 helical transmembrane segments spans residues 30–52 (FAGT…RALL) and 57–79 (TFGT…GCIW). Residues 81–88 (DILDQDFD) carry the NDxxDxxxD motif. Mg(2+) is bound by residues Asp84 and Asp88. A run of 3 helical transmembrane segments spans residues 99 to 121 (IASG…FILM), 131 to 148 (AWMI…IYPL), and 155 to 177 (WPQA…YTTG). 2 residues coordinate Mg(2+): Asp205 and Asp209. The short motif at 205–209 (DKKDD) is the DxxxD element. The short motif at 205–209 (DKKDD) is the YxxxK element. A run of 3 helical transmembrane segments spans residues 227 to 247 (PVLS…GILN), 250 to 270 (ELPY…TQLW), and 293 to 313 (AIVW…GAIM).

It belongs to the UbiA prenyltransferase family. It depends on Mg(2+) as a cofactor.

It is found in the membrane. The catalysed reaction is hydroquinone + (2E)-geranyl diphosphate = (2E)-geranylhydroquinone + diphosphate. It participates in secondary metabolite biosynthesis; terpenoid biosynthesis. Functionally, prenyltransferase; part of the gene cluster that mediates the biosynthesis of clavilactone A, a meroterpenoid that features a unique benzo-fused ten-membered carbocyclic ring unit with an alpha,beta-epoxy-gamma-lactone moiety, forming an intriguing 10/5/3 tricyclic nested skeleton. ClaR, ClaS and ClaT are sufficient to produce clavilactone A. Within the pathway, claS acts as an atypical UbiA prenyltransferase that transfers geranyl pyrophosphate (GPP) to hydroquinone (HYQ) instead of p-hydroxybenzoic acid (PHB), producing the first intermediate geranylhydroquinone. The cytochrome P450 monooxygenase claR then catalyzes the diradical coupling reaction between the intramolecular hydroquinone and allyl moieties to form the benzo-fused ten-membered carbocyclic ring unit of wigantol. Finally the cytochrome P450 monooxygenase claT exquisitely and stereoselectively assembles the alpha,beta-epoxy-gamma-lactone moiety, producing clavilactone A via arnebinol A. The polypeptide is UbiA prenyltransferase claS (Ampulloclitocybe clavipes (Club foot)).